The sequence spans 315 residues: Transcription factor MafAa (315 aa).

Residues 52-104 (STPISTPCSSVPSSPSFCAPSPGSQPGQNLVNGVNNNNNNSGNGNNNTQGSSG) show a composition bias toward low complexity. 2 disordered regions span residues 52–108 (STPI…KPQM) and 169–191 (ATNGHHHPVHHHHHHHGHHAHAR). A compositionally biased stretch (basic residues) spans 172–189 (GHHHPVHHHHHHHGHHAH). A basic motif region spans residues 223-248 (RLKQKRRTLKNRGYAQSCRYKRVQQR). A bZIP domain is found at 223–286 (RLKQKRRTLK…DLYKEKYEKL (64 aa)). The tract at residues 229 to 243 (RTLKNRGYAQSCRYK) is interaction with DNA. A leucine-zipper region spans residues 251 to 272 (LESEKCTLQSQVEQLKQDVARL). Residues 290–315 (AFNGGGNTRDPSSGNHVKTTSTDFFM) form a disordered region. The segment covering 298–315 (RDPSSGNHVKTTSTDFFM) has biased composition (polar residues).

Belongs to the bZIP family. Maf subfamily.

It is found in the nucleus. Functionally, transcription factor, possibly involved in transcription regulation during lens development, including that of crystallin genes. Specifically binds to the alphaCE2 enhancer element of crystallin gene. In Danio rerio (Zebrafish), this protein is Transcription factor MafAa (mafaa).